The following is a 378-amino-acid chain: MIKNECEKDNQLAARLAKLAGYEKVNGFYKFVNTPEKEMENLGGLLKIVKNLFPDSEEQLLSEYFLELDPNKKCARQSVEYSDINQWDTLTDKIIINLCNSKNSTSQEWGKVYSLHRKLNKNEISLNDAIRESGKCKIKSAEMLFFSNAMLMYAYLNIGEFGLMKSTSKLLEFDDLPEGFIKESFKSRVSMLEANISLNENSLLEARQHSNRAIENSNVNRICFFAYLTIGNTLIFEDYDEAKKAYIKGQKYAKNPVHQEMLDGALCFLSNIWKKENQWVNYNSDNIKYLQLRAFYYINQGNIEEATEILDELSSRDQDENELGFYYYYKGLISQDKTDYYKSIRYFKKSDDKYFIQLPLLQLERMGADLELLNLISI.

As to quaternary structure, homodimer. Interacts with the viral arbitrium peptide, this interaction changes the oligomeric state of AimR from an active dimer to an inactive monomer leading to lysogeny.

In terms of biological role, transcriptional regulator which is part of the latency-replication switch system that decides at the onset of infection whether to replicate and lyse the host or to lysogenize (latency) and keep the host viable. Activates the transcription of the aimX locus. Transcriptional activation of aimX seems to lead to the productive viral replication (lytic cycle), aimX possibly acting as a regulatory non-coding RNA. The protein is AimR transcriptional regulator (aimR) of Bacillus phage phi3T (Bacteriophage phi-3T).